Here is a 498-residue protein sequence, read N- to C-terminus: Calcium-binding tyrosine phosphorylation-regulated protein (498 aa).

The RIIa domain maps to 12–49 (YGLKTLLEGVSRAILKINPPNITQFAAVYFKELIVFRE). Disordered stretches follow at residues 74–107 (GTTQ…TDTE), 135–164 (EETP…SPAA), and 247–279 (VDLG…AYDQ). A compositionally biased stretch (low complexity) spans 145-164 (SPKPSTPKAVTPPSSPSPAA).

In terms of assembly, interacts with FSCB. In terms of processing, phosphorylated on tyrosine residues during in vitro capacitation. Dephosphorylation affects its ability to bind calcium. As to expression, expressed in testis.

It is found in the cytoplasm. The protein resides in the cytoskeleton. It localises to the cell projection. The protein localises to the cilium. Its subcellular location is the flagellum. Functionally, may function as a regulator of both motility- and head-associated functions such as capacitation and the acrosome reaction. Binds calcium in vitro. In Vulpes vulpes (Red fox), this protein is Calcium-binding tyrosine phosphorylation-regulated protein (CABYR).